Reading from the N-terminus, the 735-residue chain is Protein argonaute (735 aa).

The N-terminal domain stretch occupies residues 1–94; that stretch reads MDLLSNLRRS…LVQMGTKQLD (94 aa). The linker L1 stretch occupies residues 95–180; it reads CRNDAHRCAL…IDIHHRFYTP (86 aa). Positions 181–284 are PAZ domain; the sequence is WTVHQWLEQY…SPSLTMEMLA (104 aa). The linker L2 stretch occupies residues 285–369; it reads KVAEDSTVCD…SKTADIRNKG (85 aa). The mid domain stretch occupies residues 370 to 498; the sequence is CAKIGETSFG…LLCKAGWQPI (129 aa). A PIWI domain region spans residues 499-735; that stretch reads QLESVDHPEV…NISRDKLIAV (237 aa). Residues Asp-516, Glu-550, Asp-584, and Asp-709 contribute to the active site. Residue Asp-516 participates in Mn(2+) binding. Residues Asp-584, Asp-709, and Val-735 each coordinate Mn(2+).

The protein belongs to the argonaute family. Long pAgo subfamily. As to quaternary structure, copurifies with SSB proteins Synpcc7942_0079 and Synpcc7942_0301 as well as other proteins. Mn(2+) serves as cofactor.

In terms of biological role, a DNA-guided ssDNA endonuclease that might play a role in defense against invading mobile genetic elements. Uses short ssDNA sequences as guides (gDNA) to bind complementary target strands, resulting in cleavage of the target DNA (tDNA). The cleavage site is 10 nucleotides (nt) downstream of the target residue base-paired with the 5'-end of the gDNA. Both 5'-P and 5'-OH gDNAs confer activity; a 5'-OH guide cleaves between nt 10-11 and nt 11-12. Guide DNA mismatches in the seed (nt 2-9) can enhance activity, mismatches 1-5 nt after the cleavage site block activity. Has no appreciable activity with guide RNA or on target RNA. In situ binds to 5'-phosphorylated DNA 14-20 nt in length; small DNA maps over the chromosome and plasmid with some preference for the replication origin and the probable termination site. Also has weak guide-independent nuclease activity on DNA called 'chopping'. Overexpression of wild-type or catalytically inactive mutant has no visible effect during growth under continuous high light for up to a month. The polypeptide is Protein argonaute (Synechococcus elongatus (strain ATCC 33912 / PCC 7942 / FACHB-805) (Anacystis nidulans R2)).